Consider the following 260-residue polypeptide: Late transcription factor 1 (260 aa).

Belongs to the chordopoxvirinae VLTF-1 family. As to quaternary structure, interacts with the late transcription factors VLTF-2 and VLTF-3. Interacts with the late transcription elongation factor VLTF-4. Interacts with itself.

Functionally, associates with RNA polymerase to initiate transcription from late gene promoters. In Homo sapiens (Human), this protein is Late transcription factor 1 (OPG093).